The chain runs to 240 residues: Probable transcriptional regulatory protein HPP12_0160 (240 aa).

This sequence belongs to the TACO1 family.

The protein localises to the cytoplasm. The chain is Probable transcriptional regulatory protein HPP12_0160 from Helicobacter pylori (strain P12).